Here is a 361-residue protein sequence, read N- to C-terminus: tRNA/tmRNA (uracil-C(5))-methyltransferase (361 aa).

5 residues coordinate S-adenosyl-L-methionine: Gln185, Tyr213, Asn218, Glu234, and Asp294. Catalysis depends on Cys319, which acts as the Nucleophile. Catalysis depends on Glu353, which acts as the Proton acceptor.

This sequence belongs to the class I-like SAM-binding methyltransferase superfamily. RNA M5U methyltransferase family. TrmA subfamily.

The catalysed reaction is uridine(54) in tRNA + S-adenosyl-L-methionine = 5-methyluridine(54) in tRNA + S-adenosyl-L-homocysteine + H(+). The enzyme catalyses uridine(341) in tmRNA + S-adenosyl-L-methionine = 5-methyluridine(341) in tmRNA + S-adenosyl-L-homocysteine + H(+). Its function is as follows. Dual-specificity methyltransferase that catalyzes the formation of 5-methyluridine at position 54 (m5U54) in all tRNAs, and that of position 341 (m5U341) in tmRNA (transfer-mRNA). This is tRNA/tmRNA (uracil-C(5))-methyltransferase from Pseudomonas syringae pv. syringae (strain B728a).